The following is a 99-amino-acid chain: Integration host factor subunit alpha (99 aa).

This sequence belongs to the bacterial histone-like protein family. In terms of assembly, heterodimer of an alpha and a beta chain.

This protein is one of the two subunits of integration host factor, a specific DNA-binding protein that functions in genetic recombination as well as in transcriptional and translational control. This Pseudoalteromonas translucida (strain TAC 125) protein is Integration host factor subunit alpha.